We begin with the raw amino-acid sequence, 417 residues long: Exodeoxyribonuclease 7 large subunit (417 aa).

It belongs to the XseA family. As to quaternary structure, heterooligomer composed of large and small subunits.

The protein resides in the cytoplasm. It catalyses the reaction Exonucleolytic cleavage in either 5'- to 3'- or 3'- to 5'-direction to yield nucleoside 5'-phosphates.. Bidirectionally degrades single-stranded DNA into large acid-insoluble oligonucleotides, which are then degraded further into small acid-soluble oligonucleotides. This chain is Exodeoxyribonuclease 7 large subunit, found in Corynebacterium glutamicum (strain ATCC 13032 / DSM 20300 / JCM 1318 / BCRC 11384 / CCUG 27702 / LMG 3730 / NBRC 12168 / NCIMB 10025 / NRRL B-2784 / 534).